The chain runs to 365 residues: Heat-inducible transcription repressor HrcA (365 aa).

It belongs to the HrcA family.

Negative regulator of class I heat shock genes (grpE-dnaK-dnaJ and groELS operons). Prevents heat-shock induction of these operons. This is Heat-inducible transcription repressor HrcA from Trichormus variabilis (strain ATCC 29413 / PCC 7937) (Anabaena variabilis).